The primary structure comprises 550 residues: Glucose-6-phosphate isomerase (550 aa).

D-glucose 6-phosphate is bound by residues 163-164 (GS), 214-219 (SKTFTT), Gln-358, Glu-362, His-393, and Lys-515. The active-site Proton donor is Glu-362. Active-site residues include His-393 and Lys-515.

Belongs to the GPI family. Homodimer.

It localises to the cytoplasm. It carries out the reaction alpha-D-glucose 6-phosphate = beta-D-fructose 6-phosphate. It functions in the pathway carbohydrate degradation; glycolysis; D-glyceraldehyde 3-phosphate and glycerone phosphate from D-glucose: step 2/4. Its function is as follows. In the cytoplasm, catalyzes the conversion of glucose-6-phosphate to fructose-6-phosphate, the second step in glycolysis, and the reverse reaction during gluconeogenesis. The chain is Glucose-6-phosphate isomerase (PGI1) from Candida albicans (strain SC5314 / ATCC MYA-2876) (Yeast).